The chain runs to 195 residues: Putative NADH dehydrogenase/NAD(P)H nitroreductase Caul_0018 (195 aa).

The protein belongs to the nitroreductase family. HadB/RutE subfamily. FMN serves as cofactor.

The protein is Putative NADH dehydrogenase/NAD(P)H nitroreductase Caul_0018 of Caulobacter sp. (strain K31).